We begin with the raw amino-acid sequence, 380 residues long: Glycogenin-2 (380 aa).

UDP-binding residues include Leu10, Tyr16, and Arg95. UDP-alpha-D-glucose is bound by residues Leu10, Tyr16, Arg95, Lys104, Asp120, Ala121, Asp122, Asn158, Thr159, Asp185, Asp188, and Gln189. UDP-binding residues include Asp120, Ala121, and Asp122. Asp120 is a Mn(2+) binding site. Asp122 contacts Mn(2+). Tyr230 and Tyr232 each carry an O-linked (Glc...) tyrosine glycan. UDP is bound by residues His249, Gly252, and Lys255. His249 is a Mn(2+) binding site. The UDP-alpha-D-glucose site is built by Gly252 and Lys255. A disordered region spans residues 331-355 (SVDRNASQKSTAEKHDIEKPTSKPQ). The segment covering 341–351 (TAEKHDIEKPT) has biased composition (basic and acidic residues). Tyr367 carries an O-linked (Glc...) tyrosine glycan.

This sequence belongs to the glycosyltransferase 8 family. Glycogenin subfamily. In terms of assembly, interacts with glycogen synthase GSY2. It depends on Mn(2+) as a cofactor.

The protein resides in the cytoplasm. It is found in the vacuole. The enzyme catalyses L-tyrosyl-[glycogenin] + UDP-alpha-D-glucose = alpha-D-glucosyl-L-tyrosyl-[glycogenin] + UDP + H(+). It catalyses the reaction [1,4-alpha-D-glucosyl](n)-L-tyrosyl-[glycogenin] + UDP-alpha-D-glucose = [1,4-alpha-D-glucosyl](n+1)-L-tyrosyl-[glycogenin] + UDP + H(+). Its function is as follows. Self-glucosylating initiator of glycogen synthesis. It catalyzes the formation of a short alpha (1,4)-glucosyl chain covalently attached via a glucose 1-O-tyrosyl linkage to internal tyrosine residues and these chains act as primers for the elongation reaction catalyzed by glycogen synthase. Capable of transferring glucosyl residues to unbound acceptors such as free oligoglucans or oligoglucan derivatives. This Saccharomyces cerevisiae (strain ATCC 204508 / S288c) (Baker's yeast) protein is Glycogenin-2.